The primary structure comprises 202 residues: Amelogenin (202 aa).

Ser16 is modified (phosphoserine). Residues 77–202 (QPAPPQQPVM…TDKTKREEVD (126 aa)) are disordered. Residues 78 to 87 (PAPPQQPVMP) show a composition bias toward pro residues. Low complexity predominate over residues 101-112 (QPNLPQPGQQPY). A compositionally biased stretch (pro residues) spans 113–125 (QPQPAQQPQPHQP). Residues 126–158 (IQPIQPIQPIQPMQPMQPMQPMQPMQPMQPQTP) show a composition bias toward low complexity. A compositionally biased stretch (pro residues) spans 164-176 (PLPPQPPLPPMFP).

It belongs to the amelogenin family.

It is found in the secreted. The protein resides in the extracellular space. The protein localises to the extracellular matrix. Its function is as follows. Plays a role in the biomineralization of teeth. Seems to regulate the formation of crystallites during the secretory stage of tooth enamel development. Thought to play a major role in the structural organization and mineralization of developing enamel. This Monodelphis domestica (Gray short-tailed opossum) protein is Amelogenin (AMEL).